A 122-amino-acid chain; its full sequence is Large ribosomal subunit protein uL29 (122 aa).

Serine 12 is modified (phosphoserine).

Belongs to the universal ribosomal protein uL29 family. Component of the large ribosomal subunit (LSU). Mature yeast ribosomes consist of a small (40S) and a large (60S) subunit. The 40S small subunit contains 1 molecule of ribosomal RNA (18S rRNA) and at least 33 different proteins. The large 60S subunit contains 3 rRNA molecules (25S, 5.8S and 5S rRNA) and at least 46 different proteins. uL29 is associated with the polypeptide exit tunnel.

The protein localises to the cytoplasm. The protein resides in the nucleus. It is found in the nucleolus. Component of the ribosome, a large ribonucleoprotein complex responsible for the synthesis of proteins in the cell. The small ribosomal subunit (SSU) binds messenger RNAs (mRNAs) and translates the encoded message by selecting cognate aminoacyl-transfer RNA (tRNA) molecules. The large subunit (LSU) contains the ribosomal catalytic site termed the peptidyl transferase center (PTC), which catalyzes the formation of peptide bonds, thereby polymerizing the amino acids delivered by tRNAs into a polypeptide chain. The nascent polypeptides leave the ribosome through a tunnel in the LSU and interact with protein factors that function in enzymatic processing, targeting, and the membrane insertion of nascent chains at the exit of the ribosomal tunnel. The protein is Large ribosomal subunit protein uL29 (rpl35) of Schizosaccharomyces pombe (strain 972 / ATCC 24843) (Fission yeast).